The sequence spans 760 residues: NAD(P)H-quinone oxidoreductase subunit 5, chloroplastic (760 aa).

A run of 16 helical transmembrane segments spans residues 9–29 (WIIS…LLLF), 39–59 (IWAF…IDLF), 89–109 (IDPL…LVLV), 125–145 (FVYM…SNLI), 147–167 (IYIF…FWFT), 185–205 (GDFG…SFEF), 221–241 (NEVH…GAIA), 260–280 (TPIS…FLVA), 282–302 (LLPL…IGII), 329–349 (LGYT…FHLI), 356–376 (ALLF…VGYS), 398–418 (IAFL…CFWS), 429–449 (YSPI…FYMF), 556–576 (ILFP…IGIP), 620–640 (FSVS…KPIY), and 734–754 (FYLL…SSIF).

The protein belongs to the complex I subunit 5 family. NDH is composed of at least 16 different subunits, 5 of which are encoded in the nucleus.

The protein resides in the plastid. The protein localises to the chloroplast thylakoid membrane. The catalysed reaction is a plastoquinone + NADH + (n+1) H(+)(in) = a plastoquinol + NAD(+) + n H(+)(out). It carries out the reaction a plastoquinone + NADPH + (n+1) H(+)(in) = a plastoquinol + NADP(+) + n H(+)(out). Its function is as follows. NDH shuttles electrons from NAD(P)H:plastoquinone, via FMN and iron-sulfur (Fe-S) centers, to quinones in the photosynthetic chain and possibly in a chloroplast respiratory chain. The immediate electron acceptor for the enzyme in this species is believed to be plastoquinone. Couples the redox reaction to proton translocation, and thus conserves the redox energy in a proton gradient. This chain is NAD(P)H-quinone oxidoreductase subunit 5, chloroplastic (ndhF), found in Populus trichocarpa (Western balsam poplar).